Reading from the N-terminus, the 269-residue chain is Undecaprenyl-diphosphatase (269 aa).

A run of 8 helical transmembrane segments spans residues 3–23 (LLIK…LPIS), 41–61 (FATM…VFYY), 78–98 (GFNL…IGLL), 107–127 (LFSP…MIVI), 148–167 (SLLI…SRSA), 184–204 (AEFS…LSLL), 213–233 (LEWQ…LFVV), and 248–268 (FAYY…EKIV).

Belongs to the UppP family.

Its subcellular location is the cell membrane. It carries out the reaction di-trans,octa-cis-undecaprenyl diphosphate + H2O = di-trans,octa-cis-undecaprenyl phosphate + phosphate + H(+). Catalyzes the dephosphorylation of undecaprenyl diphosphate (UPP). Confers resistance to bacitracin. The polypeptide is Undecaprenyl-diphosphatase (Thermoanaerobacter sp. (strain X514)).